We begin with the raw amino-acid sequence, 340 residues long: DNA-directed RNA polymerase subunit alpha (340 aa).

Residues 1-236 form an alpha N-terminal domain (alpha-NTD) region; sequence MLSLSKNWNT…EQLQLFISFE (236 aa). The tract at residues 246–340 is alpha C-terminal domain (alpha-CTD); it reads TDALPFSPYL…LSNRYEDSYN (95 aa).

It belongs to the RNA polymerase alpha chain family. Homodimer. The RNAP catalytic core consists of 2 alpha, 1 beta, 1 beta' and 1 omega subunit. When a sigma factor is associated with the core the holoenzyme is formed, which can initiate transcription.

The catalysed reaction is RNA(n) + a ribonucleoside 5'-triphosphate = RNA(n+1) + diphosphate. DNA-dependent RNA polymerase catalyzes the transcription of DNA into RNA using the four ribonucleoside triphosphates as substrates. This chain is DNA-directed RNA polymerase subunit alpha, found in Rickettsia felis (strain ATCC VR-1525 / URRWXCal2) (Rickettsia azadi).